A 297-amino-acid chain; its full sequence is Mitochondrial citrate transporter A (297 aa).

Solcar repeat units follow at residues 12–91, 102–188, and 199–286; these read PSSL…LKSL, PKTV…LKQM, and LGTA…TMDA. A run of 6 helical transmembrane segments spans residues 18 to 31, 61 to 81, 99 to 119, 160 to 180, 192 to 212, and 251 to 272; these read IIAG…EIAI, SQWY…AGIR, ISGP…SLLA, FFQG…TRFS, YVAP…GIAG, and KDEG…LIMS.

The protein belongs to the mitochondrial carrier (TC 2.A.29) family.

The protein localises to the mitochondrion inner membrane. It carries out the reaction citrate(in) + H(+)(in) = citrate(out) + H(+)(out). Functionally, mitochondrial transporter that mediates citrate export from mitochondria to cytoplasm. Both ctpA, ctpB, and ctpD play important roles in citric acid transport across the mitochondrial membrane and function in a redundant manner. This Aspergillus niger (strain ATCC 1015 / CBS 113.46 / FGSC A1144 / LSHB Ac4 / NCTC 3858a / NRRL 328 / USDA 3528.7) protein is Mitochondrial citrate transporter A.